A 714-amino-acid polypeptide reads, in one-letter code: Fatty acid oxidation complex subunit alpha (714 aa).

The enoyl-CoA hydratase stretch occupies residues 1 to 190 (MEMTSAFTLN…KLGLVDDVVP (190 aa)). Residues 306-714 (APLNSVGILG…FWKTTATDLQ (409 aa)) are 3-hydroxyacyl-CoA dehydrogenase.

In the N-terminal section; belongs to the enoyl-CoA hydratase/isomerase family. It in the central section; belongs to the 3-hydroxyacyl-CoA dehydrogenase family. As to quaternary structure, heterotetramer of two alpha chains (FadJ) and two beta chains (FadI).

The protein localises to the cytoplasm. It catalyses the reaction a (3S)-3-hydroxyacyl-CoA = a (2E)-enoyl-CoA + H2O. The catalysed reaction is a 4-saturated-(3S)-3-hydroxyacyl-CoA = a (3E)-enoyl-CoA + H2O. It carries out the reaction a (3S)-3-hydroxyacyl-CoA + NAD(+) = a 3-oxoacyl-CoA + NADH + H(+). The enzyme catalyses (3S)-3-hydroxybutanoyl-CoA = (3R)-3-hydroxybutanoyl-CoA. It functions in the pathway lipid metabolism; fatty acid beta-oxidation. Its function is as follows. Catalyzes the formation of a hydroxyacyl-CoA by addition of water on enoyl-CoA. Also exhibits 3-hydroxyacyl-CoA epimerase and 3-hydroxyacyl-CoA dehydrogenase activities. The protein is Fatty acid oxidation complex subunit alpha of Escherichia coli (strain 55989 / EAEC).